The sequence spans 122 residues: Heat-labile enterotoxin IIB, B chain (122 aa).

An N-terminal signal peptide occupies residues methionine 1–alanine 23. A disulfide bridge connects residues cysteine 33 and cysteine 104.

In terms of assembly, heterohexamer of one A chain and of five B chains.

Its function is as follows. The biological activity of the toxin is produced by the A chain, which activates intracellular adenyl cyclase. The polypeptide is Heat-labile enterotoxin IIB, B chain (Escherichia coli).